The following is a 471-amino-acid chain: Cysteine--tRNA ligase (471 aa).

A Zn(2+)-binding site is contributed by C29. The 'HIGH' region signature appears at P31 to N41. C209, H234, and E238 together coordinate Zn(2+). Positions K266–S270 match the 'KMSKS' region motif. K269 lines the ATP pocket.

The protein belongs to the class-I aminoacyl-tRNA synthetase family. Monomer. Requires Zn(2+) as cofactor.

It is found in the cytoplasm. It catalyses the reaction tRNA(Cys) + L-cysteine + ATP = L-cysteinyl-tRNA(Cys) + AMP + diphosphate. The polypeptide is Cysteine--tRNA ligase (Listeria monocytogenes serovar 1/2a (strain ATCC BAA-679 / EGD-e)).